The following is a 301-amino-acid chain: Protein translocase subunit SecF (301 aa).

The next 6 helical transmembrane spans lie at 17-37, 137-157, 163-183, 190-210, 239-261, and 272-292; these read YIAL…IFQI, DALF…AIRF, IGAT…FYIL, IFIS…VVVF, LSRT…FFGG, and ILGI…VVLL.

The protein belongs to the SecD/SecF family. SecF subfamily. In terms of assembly, forms a complex with SecD. Part of the essential Sec protein translocation apparatus which comprises SecA, SecYEG and auxiliary proteins SecDF. Other proteins may also be involved.

The protein localises to the cell inner membrane. In terms of biological role, part of the Sec protein translocase complex. Interacts with the SecYEG preprotein conducting channel. SecDF uses the proton motive force (PMF) to complete protein translocation after the ATP-dependent function of SecA. This is Protein translocase subunit SecF from Thermodesulfovibrio yellowstonii (strain ATCC 51303 / DSM 11347 / YP87).